Here is a 468-residue protein sequence, read N- to C-terminus: H(+)/Cl(-) exchange transporter ClcA (468 aa).

The Cytoplasmic portion of the chain corresponds to 1–30 (MSTRETFKISLLAKMPKDVINQFLSKDKTP). The helical transmembrane segment at 31-67 (FSVLFLSLLVGILAGLVGTYFEQAVHLVSETRTDWLK) threads the bilayer. At 68 to 74 (SEIGSFL) the chain is on the periplasmic side. Residues 75–98 (PLWLAAFLISAFLAFIGYFLVHRF) traverse the membrane as a helical segment. The Selectivity filter part_1 motif lies at 104–108 (GSGIP). Ser105 is a binding site for chloride. Residues 107-114 (IPEIEGAM) constitute an intramembrane region (helical). Residues 115 to 121 (DGMRPVR) are Cytoplasmic-facing. The next 2 helical transmembrane spans lie at 122–139 (WWRV…ALGS) and 146–164 (EGPT…SDIF). A Selectivity filter part_2 motif is present at residues 144–148 (GREGP). Topologically, residues 165–174 (RVKNEDTRHS) are cytoplasmic. 2 consecutive intramembrane regions (helical) follow at residues 175-187 (LLAA…LAAA) and 191-199 (PLAGIMFVI). Topologically, residues 200–212 (EEMRPQFRYTLIS) are cytoplasmic. The chain crosses the membrane as a helical span at residues 213 to 230 (VRAVIISAVAANIVFRVI). The Periplasmic segment spans residues 231–250 (NGQDAVITMPQYDAPELSTL). Residues 251-279 (GLFLLLGALFGVFGVLFNYLITLAQDLFV) traverse the membrane as a helical segment. The Cytoplasmic portion of the chain corresponds to 280–285 (KFHRND). Residues 286 to 307 (RKRYLLTGSMIGGCFGLLLLYV) traverse the membrane as a helical segment. Residues 308-327 (PELTGGGISLIPTITNGGYG) lie on the Periplasmic side of the membrane. 2 helical membrane passes run 328 to 347 (AGIL…LCFG) and 353 to 374 (GIFA…LIAK). Positions 353-357 (GIFAP) match the Selectivity filter part_3 motif. Chloride is bound by residues Ile354 and Phe355. Over 375 to 384 (MWFPELNIEP) the chain is Periplasmic. An intramembrane region (helical) is located at residues 385–399 (GMFAIAGMGALFAAT). The note=Loop between two helices intramembrane region spans 400-402 (VRA). Residues 403 to 414 (PITGILLVIEMT) constitute an intramembrane region (helical). Residues 415 to 419 (NNYHL) constitute an intramembrane region (note=Loop between two helices). Residues 420 to 436 (ILPLIITSLGAVIFAQL) form a helical membrane-spanning segment. Topologically, residues 437–468 (LGGQPIYSQLLHRTLKNQKLQQQDLPPQSPNS) are cytoplasmic. Tyr443 serves as a coordination point for chloride.

This sequence belongs to the chloride channel (TC 2.A.49) family. ClcA subfamily. Homodimer.

It is found in the cell inner membrane. The enzyme catalyses 2 chloride(in) + H(+)(out) = 2 chloride(out) + H(+)(in). In terms of biological role, proton-coupled chloride transporter. Functions as antiport system and exchanges two chloride ions for 1 proton. Probably acts as an electrical shunt for an outwardly-directed proton pump that is linked to amino acid decarboxylation, as part of the extreme acid resistance (XAR) response. The sequence is that of H(+)/Cl(-) exchange transporter ClcA from Vibrio cholerae serotype O1 (strain ATCC 39315 / El Tor Inaba N16961).